Reading from the N-terminus, the 199-residue chain is Probable molybdenum cofactor guanylyltransferase (199 aa).

GTP-binding positions include 6–8, lysine 18, aspartate 65, and aspartate 97; that span reads LAG. Aspartate 97 is a binding site for Mg(2+).

This sequence belongs to the MobA family. It depends on Mg(2+) as a cofactor.

The protein localises to the cytoplasm. It catalyses the reaction Mo-molybdopterin + GTP + H(+) = Mo-molybdopterin guanine dinucleotide + diphosphate. Functionally, transfers a GMP moiety from GTP to Mo-molybdopterin (Mo-MPT) cofactor (Moco or molybdenum cofactor) to form Mo-molybdopterin guanine dinucleotide (Mo-MGD) cofactor. This chain is Probable molybdenum cofactor guanylyltransferase, found in Staphylococcus aureus (strain Mu50 / ATCC 700699).